Reading from the N-terminus, the 139-residue chain is Thioredoxin H-type (139 aa).

The Thioredoxin domain maps to 20–132 (ELAGGNVHLI…LHKKITAILD (113 aa)). Catalysis depends on nucleophile residues cysteine 58 and cysteine 61. A disulfide bond links cysteine 58 and cysteine 61.

Its subcellular location is the cytoplasm. In terms of biological role, participates in various redox reactions through the reversible oxidation of the active center dithiol to a disulfide. The H form is known to activate a number of cytosolic enzymes. The protein is Thioredoxin H-type of Populus jackii (Balm of Gilead).